Here is a 106-residue protein sequence, read N- to C-terminus: Large ribosomal subunit protein uL23 (106 aa).

The protein belongs to the universal ribosomal protein uL23 family. In terms of assembly, part of the 50S ribosomal subunit. Contacts protein L29, and trigger factor when it is bound to the ribosome.

In terms of biological role, one of the early assembly proteins it binds 23S rRNA. One of the proteins that surrounds the polypeptide exit tunnel on the outside of the ribosome. Forms the main docking site for trigger factor binding to the ribosome. The sequence is that of Large ribosomal subunit protein uL23 from Acinetobacter baumannii (strain AB307-0294).